A 366-amino-acid chain; its full sequence is Structure-specific endonuclease subunit SLX1 (366 aa).

In terms of domain architecture, GIY-YIG spans 14–95 (AFYCCYLLRS…QNTHATRHID (82 aa)). Disordered regions lie at residues 31 to 59 (IGSTPNPARRLGQHNGSSKGGAKRTSMQG) and 102 to 124 (RAEELQKGKKKATSPGRRRKRPP). Over residues 109–123 (GKKKATSPGRRRKRP) the composition is skewed to basic residues. The segment at 234–289 (CGVCKNPADMSSSLILVCPIEACQTVSHLSCLSNKFLTEGGELETLVPLEGTCPGC) adopts an SLX1-type zinc-finger fold. The interval 317–366 (KPKRKRKSDNPAESDAADGQALEQEDEELDETWMEDMSQDEEPSPVKKSR) is disordered. The segment covering 339–359 (EQEDEELDETWMEDMSQDEEP) has biased composition (acidic residues).

It belongs to the SLX1 family. In terms of assembly, forms a heterodimer with SLX4. It depends on a divalent metal cation as a cofactor.

Its subcellular location is the nucleus. In terms of biological role, catalytic subunit of the SLX1-SLX4 structure-specific endonuclease that resolves DNA secondary structures generated during DNA repair and recombination. Has endonuclease activity towards branched DNA substrates, introducing single-strand cuts in duplex DNA close to junctions with ss-DNA. The chain is Structure-specific endonuclease subunit SLX1 from Phaeosphaeria nodorum (strain SN15 / ATCC MYA-4574 / FGSC 10173) (Glume blotch fungus).